The following is an 80-amino-acid chain: Defensin-like protein 51 (80 aa).

An N-terminal signal peptide occupies residues 1–27 (MGFTKILVTFFLVGLLVISSSPQNAIA). 4 disulfide bridges follow: cysteine 39/cysteine 79, cysteine 43/cysteine 66, cysteine 52/cysteine 77, and cysteine 56/cysteine 78.

Belongs to the DEFL family.

It is found in the secreted. This Arabidopsis thaliana (Mouse-ear cress) protein is Defensin-like protein 51 (LCR48).